The chain runs to 132 residues: D-ribose pyranase (132 aa).

His-20 (proton donor) is an active-site residue. Substrate contacts are provided by residues Asp-28, His-99, and 121 to 123 (YAN).

Belongs to the RbsD / FucU family. RbsD subfamily. Homodecamer.

Its subcellular location is the cytoplasm. The catalysed reaction is beta-D-ribopyranose = beta-D-ribofuranose. It participates in carbohydrate metabolism; D-ribose degradation; D-ribose 5-phosphate from beta-D-ribopyranose: step 1/2. Its function is as follows. Catalyzes the interconversion of beta-pyran and beta-furan forms of D-ribose. This is D-ribose pyranase from Chromobacterium violaceum (strain ATCC 12472 / DSM 30191 / JCM 1249 / CCUG 213 / NBRC 12614 / NCIMB 9131 / NCTC 9757 / MK).